The following is a 599-amino-acid chain: DNA mismatch repair protein MutL (599 aa).

This sequence belongs to the DNA mismatch repair MutL/HexB family.

Functionally, this protein is involved in the repair of mismatches in DNA. It is required for dam-dependent methyl-directed DNA mismatch repair. May act as a 'molecular matchmaker', a protein that promotes the formation of a stable complex between two or more DNA-binding proteins in an ATP-dependent manner without itself being part of a final effector complex. The sequence is that of DNA mismatch repair protein MutL from Rhodopseudomonas palustris (strain BisB18).